The primary structure comprises 556 residues: Secreted lipase 4 (556 aa).

The signal sequence occupies residues 1 to 21 (MKLLTNIGTLLALSPVQQVSA). N-linked (GlcNAc...) asparagine glycosylation is found at Asn-46, Asn-263, Asn-305, Asn-411, and Asn-453.

It belongs to the type-B carboxylesterase/lipase family.

Its subcellular location is the secreted. The enzyme catalyses a carboxylic ester + H2O = an alcohol + a carboxylate + H(+). Its function is as follows. Secreted lipase involved in plant virulence. Has a substrate preference for p-nitrophenyl esters with a carbon chain length of C12 (p-nitrophenyl laureate). This is Secreted lipase 4 from Gibberella zeae (strain ATCC MYA-4620 / CBS 123657 / FGSC 9075 / NRRL 31084 / PH-1) (Wheat head blight fungus).